Here is a 102-residue protein sequence, read N- to C-terminus: Small ribosomal subunit protein uS10 (102 aa).

The protein belongs to the universal ribosomal protein uS10 family. Part of the 30S ribosomal subunit.

In terms of biological role, involved in the binding of tRNA to the ribosomes. The chain is Small ribosomal subunit protein uS10 from Clavibacter michiganensis subsp. michiganensis (strain NCPPB 382).